A 152-amino-acid chain; its full sequence is Large ribosomal subunit protein uL15 (152 aa).

Residues 1–13 are compositionally biased toward polar residues; the sequence is MLTLGNLSPQEGS. Positions 1–62 are disordered; it reads MLTLGNLSPQ…GGQMPLQRRL (62 aa). Residues 31-40 are compositionally biased toward basic residues; sequence TAGRGHKGFK.

Belongs to the universal ribosomal protein uL15 family. In terms of assembly, part of the 50S ribosomal subunit.

Binds to the 23S rRNA. In Desulfotalea psychrophila (strain LSv54 / DSM 12343), this protein is Large ribosomal subunit protein uL15.